The primary structure comprises 721 residues: WD repeat and coiled-coil-containing protein (721 aa).

Residue methionine 1 is modified to N-acetylmethionine. WD repeat units lie at residues glycine 55–serine 98 and asparagine 154–cysteine 194. Phosphoserine occurs at positions 299, 468, 501, and 523. Residues glutamine 520 to leucine 537 are compositionally biased toward polar residues. The tract at residues glutamine 520–glutamate 553 is disordered. Residue threonine 530 is modified to Phosphothreonine. The interval proline 539–arginine 545 is interaction with HCK. Residues glutamine 556–asparagine 584 adopt a coiled-coil conformation. Phosphoserine occurs at positions 686 and 690.

In terms of assembly, oligomer. Interacts with HCK (via SH3 domain). Post-translationally, phosphorylated on Tyr when associated with HCK.

The sequence is that of WD repeat and coiled-coil-containing protein from Homo sapiens (Human).